Consider the following 492-residue polypeptide: 2,3-bisphosphoglycerate-independent phosphoglycerate mutase (492 aa).

2 residues coordinate Mn(2+): Asp-11 and Ser-61. Ser-61 functions as the Phosphoserine intermediate in the catalytic mechanism. Substrate is bound by residues His-118, 147–148 (RD), Arg-178, Arg-184, 248–251 (RNDR), and Lys-320. Mn(2+)-binding residues include Asp-386, His-390, Asp-427, His-428, and His-445.

The protein belongs to the BPG-independent phosphoglycerate mutase family. In terms of assembly, monomer. Mn(2+) is required as a cofactor.

It carries out the reaction (2R)-2-phosphoglycerate = (2R)-3-phosphoglycerate. It participates in carbohydrate degradation; glycolysis; pyruvate from D-glyceraldehyde 3-phosphate: step 3/5. In terms of biological role, catalyzes the interconversion of 2-phosphoglycerate and 3-phosphoglycerate. The polypeptide is 2,3-bisphosphoglycerate-independent phosphoglycerate mutase (Campylobacter jejuni subsp. doylei (strain ATCC BAA-1458 / RM4099 / 269.97)).